Consider the following 228-residue polypeptide: L-ribulose-5-phosphate 4-epimerase UlaF (228 aa).

Substrate-binding positions include 26 to 27, 43 to 44, and 72 to 73; these read GN, SG, and SS. Zn(2+) contacts are provided by Asp-74, His-93, and His-95. Residue Asp-118 is the Proton donor/acceptor of the active site. His-167 is a Zn(2+) binding site. The Proton donor/acceptor role is filled by Tyr-225.

This sequence belongs to the aldolase class II family. AraD/FucA subfamily. Zn(2+) is required as a cofactor.

The catalysed reaction is L-ribulose 5-phosphate = D-xylulose 5-phosphate. Its pathway is cofactor degradation; L-ascorbate degradation; D-xylulose 5-phosphate from L-ascorbate: step 4/4. Functionally, catalyzes the isomerization of L-ribulose 5-phosphate to D-xylulose 5-phosphate. Is involved in the anaerobic L-ascorbate utilization. The protein is L-ribulose-5-phosphate 4-epimerase UlaF of Shigella flexneri.